Consider the following 452-residue polypeptide: UDP-N-acetylmuramoylalanine--D-glutamate ligase (452 aa).

119–125 contributes to the ATP binding site; sequence GSNGKTT.

It belongs to the MurCDEF family.

The protein resides in the cytoplasm. It carries out the reaction UDP-N-acetyl-alpha-D-muramoyl-L-alanine + D-glutamate + ATP = UDP-N-acetyl-alpha-D-muramoyl-L-alanyl-D-glutamate + ADP + phosphate + H(+). It participates in cell wall biogenesis; peptidoglycan biosynthesis. In terms of biological role, cell wall formation. Catalyzes the addition of glutamate to the nucleotide precursor UDP-N-acetylmuramoyl-L-alanine (UMA). The sequence is that of UDP-N-acetylmuramoylalanine--D-glutamate ligase from Streptococcus pyogenes serotype M6 (strain ATCC BAA-946 / MGAS10394).